The chain runs to 180 residues: Small ribosomal subunit protein uS5 (180 aa).

Residues 1 to 26 (MAEEKDKKQSSRRRNNRRTEKESEWQ) are disordered. A compositionally biased stretch (basic and acidic residues) spans 17 to 26 (RRTEKESEWQ). In terms of domain architecture, S5 DRBM spans 25–88 (WQERVVQIRR…ADGKKHLVNV (64 aa)).

It belongs to the universal ribosomal protein uS5 family. Part of the 30S ribosomal subunit. Contacts proteins S4 and S8.

In terms of biological role, with S4 and S12 plays an important role in translational accuracy. Its function is as follows. Located at the back of the 30S subunit body where it stabilizes the conformation of the head with respect to the body. The chain is Small ribosomal subunit protein uS5 from Synechococcus elongatus (strain ATCC 33912 / PCC 7942 / FACHB-805) (Anacystis nidulans R2).